Reading from the N-terminus, the 514-residue chain is MSLTEEIKKRRTFAIISHPDAGKTTITEQLLYFGGEIREAGTVKGKKSGTFAKSDWMDIEKQRGISVTSSVMQFDYAGKRVNILDTPGHEDFSEDTYRTLMAVDAAVMVVDSAKGIEAQTKKLFEVVKHRNIPVFTFINKLDRDGREPLELLEELEEVLGIASYPMNWPIGMGRAFEGLYDLHNKRLELYKGDERFASIEDGDQLFANNPFYEQVKEDIELLQEAGNDFSEQAILDGDLTPVFFGSALTNFGVQTFLDTFLEFAPEPHGHKTTEGNVIDPLAKDFSGFVFKIQANMDPKHRDRIAFVRIVSGEFERGMGVNLTRTGKGAKLSNVTQFMAESRENVTNAVAGDIIGVYDTGTYQVGDTLTVGKNKFEFEPLPTFTPEIFMKVSPKNVMKQKSFHKGIEQLVQEGAIQLYKNYQTGEYMLGAVGQLQFEVFKHRMEGEYNAEVVMTPMGKKTVRWISEDDLDQRMSSSRNILAKDRFDQPVFLFENDFALRWFADKYPDVTLEEKM.

Residues 8-268 (KKRRTFAIIS…TFLEFAPEPH (261 aa)) form the tr-type G domain. GTP is bound by residues 17–24 (SHPDAGKT), 85–89 (DTPGH), and 139–142 (NKLD).

It belongs to the TRAFAC class translation factor GTPase superfamily. Classic translation factor GTPase family. PrfC subfamily.

Its subcellular location is the cytoplasm. Its function is as follows. Increases the formation of ribosomal termination complexes and stimulates activities of RF-1 and RF-2. It binds guanine nucleotides and has strong preference for UGA stop codons. It may interact directly with the ribosome. The stimulation of RF-1 and RF-2 is significantly reduced by GTP and GDP, but not by GMP. The polypeptide is Peptide chain release factor 3 (Streptococcus pyogenes serotype M18 (strain MGAS8232)).